Consider the following 142-residue polypeptide: Arginine decarboxylase proenzyme (142 aa).

The Schiff-base intermediate with substrate; via pyruvic acid role is filled by serine 81. Pyruvic acid (Ser); by autocatalysis is present on serine 81. The Proton acceptor; for processing activity role is filled by histidine 86. Residue cysteine 101 is the Proton donor; for catalytic activity of the active site.

This sequence belongs to the prokaryotic AdoMetDC family. Type 1 subfamily. Heterooctamer of four alpha and four beta chains arranged as a tetramer of alpha/beta heterodimers. Pyruvate is required as a cofactor. In terms of processing, is synthesized initially as an inactive proenzyme. Formation of the active enzyme involves a self-maturation process in which the active site pyruvoyl group is generated from an internal serine residue via an autocatalytic post-translational modification. Two non-identical subunits are generated from the proenzyme in this reaction, and the pyruvate is formed at the N-terminus of the alpha chain, which is derived from the carboxyl end of the proenzyme. The post-translation cleavage follows an unusual pathway, termed non-hydrolytic serinolysis, in which the side chain hydroxyl group of the serine supplies its oxygen atom to form the C-terminus of the beta chain, while the remainder of the serine residue undergoes an oxidative deamination to produce ammonia and the pyruvoyl group blocking the N-terminus of the alpha chain.

It carries out the reaction L-arginine + H(+) = agmatine + CO2. It functions in the pathway amine and polyamine biosynthesis; agmatine biosynthesis; agmatine from L-arginine: step 1/1. In terms of biological role, specifically catalyzes the decarboxylation of L-arginine to agmatine. Has no S-adenosylmethionine decarboxylase (AdoMetDC) activity. The chain is Arginine decarboxylase proenzyme from Hyperthermus butylicus (strain DSM 5456 / JCM 9403 / PLM1-5).